A 185-amino-acid polypeptide reads, in one-letter code: Elongation factor P (185 aa).

Belongs to the elongation factor P family.

The protein resides in the cytoplasm. The protein operates within protein biosynthesis; polypeptide chain elongation. In terms of biological role, involved in peptide bond synthesis. Stimulates efficient translation and peptide-bond synthesis on native or reconstituted 70S ribosomes in vitro. Probably functions indirectly by altering the affinity of the ribosome for aminoacyl-tRNA, thus increasing their reactivity as acceptors for peptidyl transferase. In Azoarcus sp. (strain BH72), this protein is Elongation factor P.